The primary structure comprises 198 residues: Peroxiredoxin-2F, mitochondrial (198 aa).

The N-terminal 27 residues, 1–27, are a transit peptide targeting the mitochondrion; sequence MASALLRKATVGGSAAAAAARWASRGL. Positions 34–198 constitute a Thioredoxin domain; it reads SDIVSAAPGV…SGAEVILDQI (165 aa). Cys86 functions as the Cysteine sulfenic acid (-SOH) intermediate in the catalytic mechanism.

Belongs to the peroxiredoxin family. Prx5 subfamily. As to quaternary structure, monomer.

The protein localises to the mitochondrion matrix. The enzyme catalyses [glutaredoxin]-dithiol + a hydroperoxide = [glutaredoxin]-disulfide + an alcohol + H2O. Thiol-specific peroxidase that catalyzes the reduction of hydrogen peroxide and organic hydroperoxides to water and alcohols, respectively. Plays a role in cell protection against oxidative stress by detoxifying peroxides. Reduces preferentially hydrogen peroxide rather than alkyl peroxides. May be involved in mitochondrial redox homeostasis. This Oryza sativa subsp. japonica (Rice) protein is Peroxiredoxin-2F, mitochondrial (PRXIIF).